Here is a 1204-residue protein sequence, read N- to C-terminus: Cingulin (1204 aa).

Residues 7–357 (MAEPRGPVDH…GVISSGSSKA (351 aa)) form a head region. Positions 25-48 (EPVSGAEMGTLRRGGRRPAKDARA) are disordered. A ZIM motif is present at residues 48–62 (ASTYGVAVRVQGIAG). An interaction with TJP1/ZO1 region spans residues 54–67 (AVRVQGIAGQPFVV). 2 disordered regions span residues 68–174 (LNSG…DTAP) and 186–266 (DGQL…FSRA). Residues 93–119 (ALSSDSELPENPYSQVQGFPAPSQSST) are compositionally biased toward polar residues. Phosphoserine occurs at positions 95, 96, 98, 135, 137, 140, 155, 165, 214, and 217. Residues 207-231 (EQRKRSKSLDSRLPRDTLEERERQS) are compositionally biased toward basic and acidic residues. Over residues 232–245 (TNHWNPSTKYNNHV) the composition is skewed to polar residues. Residues 247-261 (SLKQPAQSPSPSPLS) show a composition bias toward low complexity. 4 positions are modified to phosphoserine: serine 258, serine 276, serine 338, and serine 351. The stretch at 358–1161 (MAGQGELARK…SLEKDSWRKA (804 aa)) forms a coiled coil. Residues 379–398 (VKKRQKLEPSRAGLERQLEE) are disordered. Position 579 is an N6-acetyllysine (lysine 579). The disordered stretch occupies residues 1161–1182 (ASRSAAESALKHEGLSSDEEFD). Residues 1162 to 1204 (SRSAAESALKHEGLSSDEEFDSVYDPSSIASLLTESNLQTSSC) form a tail region. Phosphoserine occurs at positions 1176, 1177, and 1183.

This sequence belongs to the cingulin family. Homodimer. Interacts with TJP1/ZO1 and SPEF1.

The protein resides in the cell junction. Its subcellular location is the tight junction. Its function is as follows. Probably plays a role in the formation and regulation of the tight junction (TJ) paracellular permeability barrier. This chain is Cingulin, found in Plecturocebus moloch (Dusky titi monkey).